Here is a 369-residue protein sequence, read N- to C-terminus: Eukaryotic translation initiation factor 3 subunit F (369 aa).

In terms of domain architecture, MPN spans 31 to 170 (VNIQPQAVFS…TKTYISAPVA (140 aa)). Basic and acidic residues predominate over residues 309–334 (LDEGKEGGEKKDGEGAEGDKKTDGQR). Residues 309-369 (LDEGKEGGEK…EPREPREAAE (61 aa)) form a disordered region. The segment covering 335–353 (GQRGQGGKRGGRSGGAGGR) has biased composition (gly residues). Positions 354-369 (GGREQREPREPREAAE) are enriched in basic and acidic residues.

This sequence belongs to the eIF-3 subunit F family. Component of the eukaryotic translation initiation factor 3 (eIF-3) complex.

Its subcellular location is the cytoplasm. Its function is as follows. Component of the eukaryotic translation initiation factor 3 (eIF-3) complex, which is involved in protein synthesis of a specialized repertoire of mRNAs and, together with other initiation factors, stimulates binding of mRNA and methionyl-tRNAi to the 40S ribosome. The eIF-3 complex specifically targets and initiates translation of a subset of mRNAs involved in cell proliferation. This Neurospora crassa (strain ATCC 24698 / 74-OR23-1A / CBS 708.71 / DSM 1257 / FGSC 987) protein is Eukaryotic translation initiation factor 3 subunit F.